The primary structure comprises 95 residues: Small ribosomal subunit protein bS16 (95 aa).

Belongs to the bacterial ribosomal protein bS16 family.

The polypeptide is Small ribosomal subunit protein bS16 (Thermotoga maritima (strain ATCC 43589 / DSM 3109 / JCM 10099 / NBRC 100826 / MSB8)).